We begin with the raw amino-acid sequence, 1379 residues long: Protein three rows (1379 aa).

The interval 1031 to 1037 is separase cleavage-site; the sequence is VEPIRKQ. 3 disordered regions span residues 1206–1231, 1248–1309, and 1328–1379; these read PEDKKRTATGSVSAVKNTASKVKQSA, PSAT…ATSK, and ITTS…RHRH. A compositionally biased stretch (polar residues) spans 1213–1228; the sequence is ATGSVSAVKNTASKVK. Low complexity predominate over residues 1248-1267; it reads PSATSCSSSGGSGTENTPPS.

Interacts with pim and Sse. Cleavage of thr contributes to inactivation of Sse. Proteolytically cleaved after the metaphase-to-anaphase transition, C-terminal cleavage product is degraded. Cleavage can only proceed within complexes that contain active Sse. In terms of tissue distribution, during embryogenesis, expressed in Malpighian tubule buds, and epithelia of foregut and hindgut.

The protein resides in the cytoplasm. Required specifically for chromosome disjunction during all mitoses; maternally provided protein is sufficient until mitosis 14 then zygotic protein is required. Involved in formation and/or maintenance of epithelial structures: bud extension during Malpighian tubule development, and foregut and hindgut morphogenesis. In Drosophila melanogaster (Fruit fly), this protein is Protein three rows (thr).